Here is a 531-residue protein sequence, read N- to C-terminus: Apolipoprotein N-acyltransferase (531 aa).

7 helical membrane passes run 8–28 (IILL…LLAM), 34–54 (FGIF…IDGV), 74–94 (WSFG…AFLV), 105–125 (LAVV…VLVA), 128–148 (LWSD…VAEW), 178–198 (VLNV…PALI), and 206–226 (VGLA…YYRL). A CN hydrolase domain is found at 243–493 (VQPVIDQAKK…KGVTDAILPG (251 aa)). The active-site Proton acceptor is the Glu-287. Residue Lys-351 is part of the active site. The active-site Nucleophile is the Cys-405. A helical membrane pass occupies residues 501–521 (SMLRGRIFWFTGVFLLLVAAI).

Belongs to the CN hydrolase family. Apolipoprotein N-acyltransferase subfamily.

It is found in the cell inner membrane. It catalyses the reaction N-terminal S-1,2-diacyl-sn-glyceryl-L-cysteinyl-[lipoprotein] + a glycerophospholipid = N-acyl-S-1,2-diacyl-sn-glyceryl-L-cysteinyl-[lipoprotein] + a 2-acyl-sn-glycero-3-phospholipid + H(+). It participates in protein modification; lipoprotein biosynthesis (N-acyl transfer). Its function is as follows. Catalyzes the phospholipid dependent N-acylation of the N-terminal cysteine of apolipoprotein, the last step in lipoprotein maturation. In Sinorhizobium fredii (strain NBRC 101917 / NGR234), this protein is Apolipoprotein N-acyltransferase.